Reading from the N-terminus, the 634-residue chain is DNA gyrase subunit B (634 aa).

Residues 1 to 220 (MSYDASAIRV…EEVFLDKGGV (220 aa)) form an ATPase domain region. The interval 221 to 390 (ASFAKALAEG…EAARKARELV (170 aa)) is transducer domain. Positions 416 to 534 (AELFIVEGDS…RGHVYIAQPP (119 aa)) constitute a Toprim domain. Residues Glu422, Asp499, and Asp501 each contribute to the Mg(2+) site.

The protein belongs to the type II topoisomerase GyrB family. As to quaternary structure, heterotetramer, composed of two GyrA and two GyrB chains. Non-hydrolyzable ATP analogs induce dimerization, novobiocin also induces a small amount of dimerization. The two subunits form an intertwined dimer where the GyrB ATPase transducer helix of 1 subunit connects to the Toprim domain of the other GyrB subunit through a 10 residue linker. In the heterotetramer, GyrA contains the active site tyrosine that forms a covalent intermediate with the DNA, while GyrB binds cofactors and catalyzes ATP hydrolysis. The cofactor is Mg(2+). Mn(2+) is required as a cofactor. It depends on Ca(2+) as a cofactor.

The protein localises to the cytoplasm. It catalyses the reaction ATP-dependent breakage, passage and rejoining of double-stranded DNA.. Functionally, a type II topoisomerase that negatively supercoils closed circular double-stranded (ds) DNA in an ATP-dependent manner. It probably also catalyzes the interconversion of other topological isomers of double-stranded DNA rings, including catenanes. Relaxes negatively supercoiled DNA in an ATP-independent manner. At comparable concentrations T.thermophilus gyrase does not introduce as many negative supercoils into DNA as the E.coli enzyme. In terms of biological role, negative supercoiling favors strand separation, and DNA replication, transcription, recombination and repair, all of which involve strand separation. Type II topoisomerases break and join 2 DNA strands simultaneously in an ATP-dependent manner. This Thermus thermophilus (strain ATCC 27634 / DSM 579 / HB8) protein is DNA gyrase subunit B.